A 106-amino-acid chain; its full sequence is A-type ATP synthase subunit F (106 aa).

The protein belongs to the V-ATPase F subunit family. Has multiple subunits with at least A(3), B(3), C, D, E, F, H, I and proteolipid K(x).

The protein localises to the cell membrane. Component of the A-type ATP synthase that produces ATP from ADP in the presence of a proton gradient across the membrane. In Haloferax volcanii (strain ATCC 29605 / DSM 3757 / JCM 8879 / NBRC 14742 / NCIMB 2012 / VKM B-1768 / DS2) (Halobacterium volcanii), this protein is A-type ATP synthase subunit F.